Here is a 461-residue protein sequence, read N- to C-terminus: MKMIIIFFILLILNLIKSQQYGPTWDQINSRPLPGWYDDVKFGIFIHFGIYSVPAFANGGYAEWYWWTLKNPSSDGGATQRYHEKEFGANFTYQDFVSRFDCRLFDANEWASIIEKSGAKYVVLTSKHHEGYTLWNSEQSWNWNSVETGPGIDIVGELTKSVKNMGLHMGLYHSLFEWFNPLYLADAETGKNPTTQVYVDEILMKQLKDIVTTYEPELIWADGDWMQLSNYWKSTEFLSWLYTNSSVKDTVIVNDRWGSECRDKNGGFYTGADHFNPYKLQSHKWENCATIGYSYGYDEYEQATDYQNATELIIDLVTTVACGGNFLLDVGPDAQGTIPNNMVDRLLEIGNWLSINSESIYGSSPWRVQNMTFNIWYTTNTTNGNVYAFVFELPDDGVLILSDPIGNNKTEATLLGLKGEKGVEVSLPIESTKPGITLNIPMVAPQDYPPYVYVFRLTDVE.

A signal peptide spans 1 to 18 (MKMIIIFFILLILNLIKS).

The protein belongs to the glycosyl hydrolase 29 family.

The catalysed reaction is an alpha-L-fucoside + H2O = L-fucose + an alcohol. Its function is as follows. Alpha-L-fucosidase is responsible for hydrolyzing the alpha-1,6-linked fucose joined to the reducing-end N-acetylglucosamine of the carbohydrate moieties of glycoproteins. This Dictyostelium discoideum (Social amoeba) protein is Alpha-L-fucosidase (alfA).